We begin with the raw amino-acid sequence, 689 residues long: Solute carrier family 22 member 23 (689 aa).

2 disordered regions span residues 1–55 (MAID…PLPA) and 162–188 (TASWGTTSNRSNSSDTPPLPSPPGKGN). Asn-24 carries N-linked (GlcNAc...) asparagine glycosylation. The segment covering 165 to 177 (WGTTSNRSNSSDT) has biased composition (polar residues). A run of 2 helical transmembrane segments spans residues 229 to 249 (FSLLVGLIFGYLITGCIADWV) and 253 to 273 (PVLLFSVIFILIFGLTVALSV). N-linked (GlcNAc...) asparagine glycosylation is present at Asn-274. Transmembrane regions (helical) follow at residues 283–303 (FFEGFCLAGIILTLYALRIEL), 310–330 (FIITMVASFVAMAGQFLMPGL), 339–359 (VLQALIICPFLLMLLYWSIFP), 462–482 (ADYYTMASIALASCLAMCLVV), 489–509 (GGLLLFMILTALASLLQLGLL), 541–561 (IAFSIVGMFASHAVGSLSVFF), 572–592 (CGGLGLVLASAGFGMLTAPII), and 601–621 (FLHHIIFACCTLICIICILLL).

This sequence belongs to the major facilitator (TC 2.A.1) superfamily. Organic cation transporter (TC 2.A.1.19) family. In terms of tissue distribution, expressed in many tissues, including brain, spinal cord, kidney, liver, eye, adipose tissue, lung, epididymis, adrenal gland, pineal gland, skeletal muscle, heart, spleen, thymus, ovary, uterus, testis and epididymis.

Its subcellular location is the membrane. The polypeptide is Solute carrier family 22 member 23 (Slc22a23) (Rattus norvegicus (Rat)).